The sequence spans 65 residues: Toxin Cbi1 (65 aa).

The LCN-type CS-alpha/beta domain occupies 1–64; it reads KDGYPMDNKG…VWDRATNKCR (64 aa). 4 disulfides stabilise this stretch: C11-C63, C15-C37, C22-C44, and C26-C46.

Belongs to the long (4 C-C) scorpion toxin superfamily. Sodium channel inhibitor family. Beta subfamily. As to expression, expressed by the venom gland.

It localises to the secreted. Its function is as follows. Beta toxins bind voltage-independently at site-4 of sodium channels (Nav) and shift the voltage of activation toward more negative potentials thereby affecting sodium channel activation and promoting spontaneous and repetitive firing. This is Toxin Cbi1 from Centruroides bicolor (Scorpion).